The sequence spans 292 residues: NAD kinase (292 aa).

The Proton acceptor role is filled by D72. NAD(+) is bound by residues 72-73 (DG), 146-147 (NE), H157, R174, D176, and 187-192 (TAYALS).

It belongs to the NAD kinase family. It depends on a divalent metal cation as a cofactor.

The protein localises to the cytoplasm. It carries out the reaction NAD(+) + ATP = ADP + NADP(+) + H(+). Functionally, involved in the regulation of the intracellular balance of NAD and NADP, and is a key enzyme in the biosynthesis of NADP. Catalyzes specifically the phosphorylation on 2'-hydroxyl of the adenosine moiety of NAD to yield NADP. This chain is NAD kinase, found in Shewanella oneidensis (strain ATCC 700550 / JCM 31522 / CIP 106686 / LMG 19005 / NCIMB 14063 / MR-1).